A 430-amino-acid chain; its full sequence is MQMNIGRCGPVCFSCSAPPSKSYTHRALIIAALADGQSEIIGQLDADDTRMTARALMQLGVRLDWSRENIRVQGTGGHLKAPVEEINIQDSGTSMRLLTGVSLLADGPVVLTGSGRMQERPLGPLIDTLNNAGAKITCLKNPGCPPVRIDGTFPAGDMYVDGSISSQFISSLLIAAPYADNDVHIHLTGDPVSLPYIMMTIDSMRAFGAEVLVDGDDKEPVFTISSQRRYKPQTYGIEGDFSSSSYWFALAAICGGSATISGLNPQSAQGDRRLLEILVNMGCSITEKRESIILSRDPDVLLKGIKVDMADCPDIVQTVCMVAAVSSSPTRITGVHHLRMKESDRIAAIANGLTTLGGRVETEEDVIVIHPAPLHGGIIHPENDHRTAMSFAVLGCFIGDVTILDAECVTKSYPGFWEELRRIWQNAVLC.

Lysine 21, serine 22, and arginine 26 together coordinate 3-phosphoshikimate. Residue lysine 21 participates in phosphoenolpyruvate binding. Glycine 92 and arginine 120 together coordinate phosphoenolpyruvate. 3-phosphoshikimate contacts are provided by serine 165, serine 166, glutamine 167, serine 193, aspartate 314, and lysine 341. Residue glutamine 167 participates in phosphoenolpyruvate binding. Aspartate 314 acts as the Proton acceptor in catalysis. Phosphoenolpyruvate contacts are provided by arginine 345, arginine 386, and lysine 411.

It belongs to the EPSP synthase family. As to quaternary structure, monomer.

It localises to the cytoplasm. The catalysed reaction is 3-phosphoshikimate + phosphoenolpyruvate = 5-O-(1-carboxyvinyl)-3-phosphoshikimate + phosphate. Its pathway is metabolic intermediate biosynthesis; chorismate biosynthesis. Catalyzes the transfer of the enolpyruvyl moiety of phosphoenolpyruvate (PEP) to the 5-hydroxyl of shikimate-3-phosphate (S3P) to produce enolpyruvyl shikimate-3-phosphate and inorganic phosphate. This chain is 3-phosphoshikimate 1-carboxyvinyltransferase, found in Methanospirillum hungatei JF-1 (strain ATCC 27890 / DSM 864 / NBRC 100397 / JF-1).